Reading from the N-terminus, the 635-residue chain is Chaperone protein HtpG (635 aa).

Positions 1 to 337 are a; substrate-binding; it reads MELKMHNVQE…SPDLPLNISR (337 aa). Residues 338–556 are b; sequence ETLQNNRVVE…EGAMDLRMER (219 aa). The c stretch occupies residues 557 to 635; that stretch reads FLREQKQLNY…LNNLLGKISV (79 aa).

The protein belongs to the heat shock protein 90 family. As to quaternary structure, homodimer.

It localises to the cytoplasm. Molecular chaperone. Has ATPase activity. The chain is Chaperone protein HtpG from Wolbachia pipientis wMel.